The following is a 63-amino-acid chain: Large ribosomal subunit protein uL30 (63 aa).

Belongs to the universal ribosomal protein uL30 family. As to quaternary structure, part of the 50S ribosomal subunit.

This chain is Large ribosomal subunit protein uL30, found in Rickettsia canadensis (strain McKiel).